The following is a 415-amino-acid chain: ATP-dependent RNA helicase RhlB (415 aa).

The short motif at 9–37 (KKFSDFALYPPIVEVLDSKGFNNCTPIQA) is the Q motif element. The region spanning 40 to 219 (LPTTLAGKDV…FEHMNNAEYV (180 aa)) is the Helicase ATP-binding domain. An ATP-binding site is contributed by 53 to 60 (AQTGTGKT). A DEAD box motif is present at residues 165-168 (DEAD). Positions 245-390 (RLLQTLIEEE…VSKYNSDALL (146 aa)) constitute a Helicase C-terminal domain. The tract at residues 396–415 (PKRLTRRRSGAPRHNRKRPG) is disordered. Over residues 398–415 (RLTRRRSGAPRHNRKRPG) the composition is skewed to basic residues.

The protein belongs to the DEAD box helicase family. RhlB subfamily. Component of the RNA degradosome, which is a multiprotein complex involved in RNA processing and mRNA degradation.

It localises to the cytoplasm. It carries out the reaction ATP + H2O = ADP + phosphate + H(+). In terms of biological role, DEAD-box RNA helicase involved in RNA degradation. Has RNA-dependent ATPase activity and unwinds double-stranded RNA. This chain is ATP-dependent RNA helicase RhlB, found in Sodalis glossinidius (strain morsitans).